Reading from the N-terminus, the 264-residue chain is Proteasome assembly chaperone 2 (264 aa).

Phosphothreonine is present on Thr-137.

The protein belongs to the PSMG2 family. In terms of assembly, forms a heterodimer with PSMG1. The PSMG1-PSMG2 heterodimer interacts directly with the PSMA5 and PSMA7 proteasome alpha subunits. In terms of processing, degraded by the proteasome upon completion of 20S proteasome maturation.

It localises to the nucleus. Functionally, chaperone protein which promotes assembly of the 20S proteasome as part of a heterodimer with PSMG1. The PSMG1-PSMG2 heterodimer binds to the PSMA5 and PSMA7 proteasome subunits, promotes assembly of the proteasome alpha subunits into the heteroheptameric alpha ring and prevents alpha ring dimerization. This is Proteasome assembly chaperone 2 from Bos taurus (Bovine).